The sequence spans 517 residues: Ribonuclease Y (517 aa).

The chain crosses the membrane as a helical span at residues 2–22 (EILVYIIIGIAIFILSLLVGI). The KH domain occupies 207 to 267 (TTSTVALPTD…LRREIAKRTL (61 aa)). Residues 333–426 (VLEHSIEVAQ…VAASDALSAS (94 aa)) enclose the HD domain.

It belongs to the RNase Y family.

It is found in the cell membrane. Its function is as follows. Endoribonuclease that initiates mRNA decay. The polypeptide is Ribonuclease Y (Petrotoga mobilis (strain DSM 10674 / SJ95)).